Here is a 274-residue protein sequence, read N- to C-terminus: Large ribosomal subunit protein uL2cz/uL2cy (274 aa).

Disordered regions lie at residues 1-23 (MAIH…SQVK) and 223-274 (MNPV…RRSK). The segment covering 7-23 (KTSTPSTRNGTVGSQVK) has biased composition (polar residues).

Belongs to the universal ribosomal protein uL2 family. As to quaternary structure, part of the 50S ribosomal subunit.

It localises to the plastid. The protein localises to the chloroplast. This Nandina domestica (Heavenly bamboo) protein is Large ribosomal subunit protein uL2cz/uL2cy (rpl2-A).